A 395-amino-acid chain; its full sequence is MAKRQVQKETRSQPHFLQFNNLACETAGGKVIFATDEWFAPARNLLKRDPPEFIASAFTEFGKWMDGWETRRKRIPGHDWCIVQLGVPGIIHGFDVDTSFFTGNYAPFASIQATCLDQMPSIALEGDRTGMAASPSQFEAVAQLNSDSWKEVVPVTKLKAGYSDTCHNYLSVSYPHRVTHIRFNIYPDGGIARLKVYGIGKKDWSSVFGQDLVDLVALVNGGVCVGFSDAHYGHPRNMIGLGMAENMGDGWETARRLDRPRVLKEDENGILQVPGSEWAIFRLGHPGIISKIELDTNHFKGNFPDSCRIEACSLTEDEENSFIQSQWSSDRSPMWNILLPPQKMKAHHRHVFSGPSLVHCGPVSHVRMVIAPDGGISRLRIWGRPVSSHQMISKL.

The protein belongs to the allantoicase family.

The catalysed reaction is allantoate + H2O = (S)-ureidoglycolate + urea. Its pathway is nitrogen metabolism; (S)-allantoin degradation; (S)-ureidoglycolate from allantoate (aminidohydrolase route): step 1/1. Functionally, utilization of purines as secondary nitrogen sources, when primary sources are limiting. This is Allantoicase (allc) from Danio rerio (Zebrafish).